The sequence spans 114 residues: NLP effector protein 1 (114 aa).

This sequence belongs to the Necrosis inducing protein (NPP1) family.

It is found in the secreted. It localises to the host cytoplasm. Its function is as follows. Probable secreted effector that may act as a pathogen-associated molecular pattern (PAMP) recognized by the plant immune system. Seems not to induce necrosis, neither in several susceptible or resistant Vitis species nor in the dicot model plant Nicotiana benthamiana. This chain is NLP effector protein 1, found in Plasmopara viticola (Downy mildew of grapevine).